The sequence spans 293 residues: Elongation factor Ts (293 aa).

Residues 80 to 83 (TDFV) are involved in Mg(2+) ion dislocation from EF-Tu.

Belongs to the EF-Ts family.

The protein localises to the cytoplasm. Its function is as follows. Associates with the EF-Tu.GDP complex and induces the exchange of GDP to GTP. It remains bound to the aminoacyl-tRNA.EF-Tu.GTP complex up to the GTP hydrolysis stage on the ribosome. In Burkholderia cenocepacia (strain HI2424), this protein is Elongation factor Ts.